The sequence spans 347 residues: MDTFFSFYVLPALLILLKSVVLIVVLLIFVAYILYADRKIWAAVQLRRGPNVVGPWGTLQAFADLLKFVFKEPVIPSGANKGVFLLAPLVSAVLAISAWAVIPVNQGWAIANVNVGILYVFAISSLEVYGVIMGGWASNSKYPFLGALRSAAQMVSYEVSIGFVIVTVLLTAGSLNLSDIVLSQHDGIGTRLGLPNTFLDWNWLALFPMFIIFFISALAETNRPPFDLVEAESELVAGHMVEYSSTPFLLFFLGEYVAIVLMCALATILFLGGWLPPFDFVPFTWVPGVIWFVLKVCFVFFGISMVKAFVPRYRYDQLMRLGWKVFLPISLFMVVATAAFLKITGFA.

The next 8 helical transmembrane spans lie at 13 to 33 (LLIL…VAYI), 82 to 102 (GVFL…WAVI), 115 to 135 (VGIL…IMGG), 161 to 181 (IGFV…SDIV), 198 to 218 (FLDW…ISAL), 248 to 268 (FLLF…LATI), 283 to 303 (FTWV…FFGI), and 321 to 341 (LGWK…AAFL).

Belongs to the complex I subunit 1 family. As to quaternary structure, NDH-1 is composed of 14 different subunits. Subunits NuoA, H, J, K, L, M, N constitute the membrane sector of the complex.

The protein resides in the cell inner membrane. It carries out the reaction a quinone + NADH + 5 H(+)(in) = a quinol + NAD(+) + 4 H(+)(out). Its function is as follows. NDH-1 shuttles electrons from NADH, via FMN and iron-sulfur (Fe-S) centers, to quinones in the respiratory chain. The immediate electron acceptor for the enzyme in this species is believed to be ubiquinone. Couples the redox reaction to proton translocation (for every two electrons transferred, four hydrogen ions are translocated across the cytoplasmic membrane), and thus conserves the redox energy in a proton gradient. This subunit may bind ubiquinone. This Mesorhizobium japonicum (strain LMG 29417 / CECT 9101 / MAFF 303099) (Mesorhizobium loti (strain MAFF 303099)) protein is NADH-quinone oxidoreductase subunit H.